Reading from the N-terminus, the 493-residue chain is Galactose-1-phosphate uridylyltransferase (493 aa).

Belongs to the galactose-1-phosphate uridylyltransferase type 2 family.

It localises to the cytoplasm. The catalysed reaction is alpha-D-galactose 1-phosphate + UDP-alpha-D-glucose = alpha-D-glucose 1-phosphate + UDP-alpha-D-galactose. It functions in the pathway carbohydrate metabolism; galactose metabolism. The protein is Galactose-1-phosphate uridylyltransferase of Streptococcus pneumoniae (strain CGSP14).